Consider the following 77-residue polypeptide: UPF0349 protein lin2491 (77 aa).

The protein belongs to the UPF0349 family.

This Listeria innocua serovar 6a (strain ATCC BAA-680 / CLIP 11262) protein is UPF0349 protein lin2491.